Reading from the N-terminus, the 201-residue chain is Protein GrpE (201 aa).

Residues 1 to 32 form a disordered region; that stretch reads MTDRDRQPEDTTAPTGEPVVSKPYIMPDDPEP.

The protein belongs to the GrpE family. In terms of assembly, homodimer.

It localises to the cytoplasm. Its function is as follows. Participates actively in the response to hyperosmotic and heat shock by preventing the aggregation of stress-denatured proteins, in association with DnaK and GrpE. It is the nucleotide exchange factor for DnaK and may function as a thermosensor. Unfolded proteins bind initially to DnaJ; upon interaction with the DnaJ-bound protein, DnaK hydrolyzes its bound ATP, resulting in the formation of a stable complex. GrpE releases ADP from DnaK; ATP binding to DnaK triggers the release of the substrate protein, thus completing the reaction cycle. Several rounds of ATP-dependent interactions between DnaJ, DnaK and GrpE are required for fully efficient folding. The protein is Protein GrpE of Bradyrhizobium diazoefficiens (strain JCM 10833 / BCRC 13528 / IAM 13628 / NBRC 14792 / USDA 110).